Consider the following 456-residue polypeptide: Na(+)-translocating NADH-quinone reductase subunit A (456 aa).

This sequence belongs to the NqrA family. As to quaternary structure, composed of six subunits; NqrA, NqrB, NqrC, NqrD, NqrE and NqrF.

It catalyses the reaction a ubiquinone + n Na(+)(in) + NADH + H(+) = a ubiquinol + n Na(+)(out) + NAD(+). Its function is as follows. NQR complex catalyzes the reduction of ubiquinone-1 to ubiquinol by two successive reactions, coupled with the transport of Na(+) ions from the cytoplasm to the periplasm. NqrA to NqrE are probably involved in the second step, the conversion of ubisemiquinone to ubiquinol. The polypeptide is Na(+)-translocating NADH-quinone reductase subunit A (Rhodopirellula baltica (strain DSM 10527 / NCIMB 13988 / SH1)).